The sequence spans 602 residues: Elongation factor 4 (602 aa).

The 183-residue stretch at 7–189 (KKIRNFSIIA…SIVKNVPSPK (183 aa)) folds into the tr-type G domain. Residues 19–24 (DHGKST) and 136–139 (NKID) each bind GTP.

It belongs to the TRAFAC class translation factor GTPase superfamily. Classic translation factor GTPase family. LepA subfamily.

Its subcellular location is the cell membrane. The catalysed reaction is GTP + H2O = GDP + phosphate + H(+). Required for accurate and efficient protein synthesis under certain stress conditions. May act as a fidelity factor of the translation reaction, by catalyzing a one-codon backward translocation of tRNAs on improperly translocated ribosomes. Back-translocation proceeds from a post-translocation (POST) complex to a pre-translocation (PRE) complex, thus giving elongation factor G a second chance to translocate the tRNAs correctly. Binds to ribosomes in a GTP-dependent manner. This Alkaliphilus oremlandii (strain OhILAs) (Clostridium oremlandii (strain OhILAs)) protein is Elongation factor 4.